Here is a 303-residue protein sequence, read N- to C-terminus: Protease HtpX (303 aa).

Transmembrane regions (helical) follow at residues 4–24 (IGLFLLTNLAVLVVFSIVFGI) and 42–62 (IASLAVMCAVYGMIGSMISLF). H149 contributes to the Zn(2+) binding site. E150 is a catalytic residue. Residue H153 participates in Zn(2+) binding. 2 helical membrane-spanning segments follow: residues 157–177 (GDMVTLALIQGVVNAFVMFFA) and 200–220 (FVTSIVMDILLGFLASAIVMW). E226 serves as a coordination point for Zn(2+).

It belongs to the peptidase M48B family. Requires Zn(2+) as cofactor.

Its subcellular location is the cell inner membrane. The sequence is that of Protease HtpX from Psychrobacter sp. (strain PRwf-1).